We begin with the raw amino-acid sequence, 180 residues long: Large ribosomal subunit protein uL5 (180 aa).

The protein belongs to the universal ribosomal protein uL5 family. Part of the 50S ribosomal subunit; part of the 5S rRNA/L5/L18/L25 subcomplex. Contacts the 5S rRNA and the P site tRNA. Forms a bridge to the 30S subunit in the 70S ribosome.

In terms of biological role, this is one of the proteins that bind and probably mediate the attachment of the 5S RNA into the large ribosomal subunit, where it forms part of the central protuberance. In the 70S ribosome it contacts protein S13 of the 30S subunit (bridge B1b), connecting the 2 subunits; this bridge is implicated in subunit movement. Contacts the P site tRNA; the 5S rRNA and some of its associated proteins might help stabilize positioning of ribosome-bound tRNAs. The chain is Large ribosomal subunit protein uL5 from Stenotrophomonas maltophilia (strain R551-3).